A 485-amino-acid chain; its full sequence is Probable glycine dehydrogenase (decarboxylating) subunit 2 (485 aa).

Lys-269 carries the N6-(pyridoxal phosphate)lysine modification.

This sequence belongs to the GcvP family. C-terminal subunit subfamily. In terms of assembly, the glycine cleavage system is composed of four proteins: P, T, L and H. In this organism, the P 'protein' is a heterodimer of two subunits. The cofactor is pyridoxal 5'-phosphate.

The catalysed reaction is N(6)-[(R)-lipoyl]-L-lysyl-[glycine-cleavage complex H protein] + glycine + H(+) = N(6)-[(R)-S(8)-aminomethyldihydrolipoyl]-L-lysyl-[glycine-cleavage complex H protein] + CO2. The glycine cleavage system catalyzes the degradation of glycine. The P protein binds the alpha-amino group of glycine through its pyridoxal phosphate cofactor; CO(2) is released and the remaining methylamine moiety is then transferred to the lipoamide cofactor of the H protein. The sequence is that of Probable glycine dehydrogenase (decarboxylating) subunit 2 from Chlorobium phaeovibrioides (strain DSM 265 / 1930) (Prosthecochloris vibrioformis (strain DSM 265)).